Consider the following 142-residue polypeptide: ATP synthase subunit b' (142 aa).

Residues 7–27 (TLPLMMFQFFLLVAVLNAVFF) form a helical membrane-spanning segment.

This sequence belongs to the ATPase B chain family. As to quaternary structure, F-type ATPases have 2 components, F(1) - the catalytic core - and F(0) - the membrane proton channel. F(1) has five subunits: alpha(3), beta(3), gamma(1), delta(1), epsilon(1). F(0) has four main subunits: a(1), b(1), b'(1) and c(10-14). The alpha and beta chains form an alternating ring which encloses part of the gamma chain. F(1) is attached to F(0) by a central stalk formed by the gamma and epsilon chains, while a peripheral stalk is formed by the delta, b and b' chains.

The protein localises to the cellular thylakoid membrane. Functionally, f(1)F(0) ATP synthase produces ATP from ADP in the presence of a proton or sodium gradient. F-type ATPases consist of two structural domains, F(1) containing the extramembraneous catalytic core and F(0) containing the membrane proton channel, linked together by a central stalk and a peripheral stalk. During catalysis, ATP synthesis in the catalytic domain of F(1) is coupled via a rotary mechanism of the central stalk subunits to proton translocation. Its function is as follows. Component of the F(0) channel, it forms part of the peripheral stalk, linking F(1) to F(0). The b'-subunit is a diverged and duplicated form of b found in plants and photosynthetic bacteria. The polypeptide is ATP synthase subunit b' (Acaryochloris marina (strain MBIC 11017)).